Here is a 155-residue protein sequence, read N- to C-terminus: Xanthine-guanine phosphoribosyltransferase 2 (155 aa).

Residues 37-38 and 91-99 each bind 5-phospho-alpha-D-ribose 1-diphosphate; these read RG and DDLVDTGNT. Mg(2+) is bound at residue aspartate 92. Guanine is bound by residues aspartate 95 and isoleucine 138. Residues aspartate 95 and isoleucine 138 each coordinate xanthine. Residues 95 to 99 and 137 to 138 contribute to the GMP site; these read DTGNT and WI.

Belongs to the purine/pyrimidine phosphoribosyltransferase family. XGPT subfamily. Homotetramer. Requires Mg(2+) as cofactor.

Its subcellular location is the cell inner membrane. It catalyses the reaction GMP + diphosphate = guanine + 5-phospho-alpha-D-ribose 1-diphosphate. It carries out the reaction XMP + diphosphate = xanthine + 5-phospho-alpha-D-ribose 1-diphosphate. The enzyme catalyses IMP + diphosphate = hypoxanthine + 5-phospho-alpha-D-ribose 1-diphosphate. It functions in the pathway purine metabolism; GMP biosynthesis via salvage pathway; GMP from guanine: step 1/1. Its pathway is purine metabolism; XMP biosynthesis via salvage pathway; XMP from xanthine: step 1/1. In terms of biological role, purine salvage pathway enzyme that catalyzes the transfer of the ribosyl-5-phosphate group from 5-phospho-alpha-D-ribose 1-diphosphate (PRPP) to the N9 position of the 6-oxopurines guanine and xanthine to form the corresponding ribonucleotides GMP (guanosine 5'-monophosphate) and XMP (xanthosine 5'-monophosphate), with the release of PPi. To a lesser extent, also acts on hypoxanthine. In Haemophilus influenzae (strain 86-028NP), this protein is Xanthine-guanine phosphoribosyltransferase 2.